Reading from the N-terminus, the 492-residue chain is Falcipain-3 (492 aa).

The Cytoplasmic portion of the chain corresponds to 1–35 (MEYHMEYSPNEVIKQEREVFVGKEKSGSKFKRKRS). Residues 1–242 (MEYHMEYSPN…LNLKTHGPFK (242 aa)) constitute a propeptide, activation peptide. The Bipartite vacuolar targeting signal 1 motif lies at 16–25 (EREVFVGKEK). A helical; Signal-anchor for type II membrane protein transmembrane segment spans residues 36–56 (IFIVLTVSICFMFALMLFYFT). The Lumenal segment spans residues 57–492 (RNENNKTLFT…GTEAYVPLLE (436 aa)). N61 is a glycosylation site (N-linked (GlcNAc...) asparagine). Positions 84 to 105 (KSESGKKFIVSKLEELISSYDK) match the Bipartite vacuolar targeting signal 2 motif. N129 carries an N-linked (GlcNAc...) asparagine glycan. Positions 251–268 (EANYEDVIKKYKPADAKL) match the Nose motif; required for the correct folding of the mature form motif. 4 disulfides stabilise this stretch: C290–C331, C324–C365, C350–C370, and C419–C480. C293 is an active-site residue. H425 is an active-site residue. The Arm motif; binds to host hemoglobin and required for the inhibitory interaction between the propeptide and the catalytic domain motif lies at 436–445 (DIYNEDTGRM). Residue N455 is part of the active site.

This sequence belongs to the peptidase C1 family. Post-translationally, auto-cleavage occurs at acidic pH. The proenzyme is the predominant form in late trophozoites and both the pro and mature enzyme are present in schizonts.

The protein resides in the membrane. The protein localises to the vacuole. It is found in the cytoplasmic vesicle membrane. With respect to regulation, inhibited by cysteine protease inhibitor ICP. Its function is as follows. Cysteine protease which cleaves native host hemoglobin and globin in the food vacuole during the asexual blood stage. Preferentially cleaves substrates which have an arginine at the P1 position and a leucine at the P2 position. This is Falcipain-3 from Plasmodium falciparum (isolate 3D7).